Reading from the N-terminus, the 265-residue chain is 3-methyl-2-oxobutanoate hydroxymethyltransferase (265 aa).

D44 and D83 together coordinate Mg(2+). 3-methyl-2-oxobutanoate is bound by residues 44-45 (DS), D83, and K113. E115 is a Mg(2+) binding site. The active-site Proton acceptor is the E183.

It belongs to the PanB family. As to quaternary structure, homodecamer; pentamer of dimers. Mg(2+) serves as cofactor.

It is found in the cytoplasm. It carries out the reaction 3-methyl-2-oxobutanoate + (6R)-5,10-methylene-5,6,7,8-tetrahydrofolate + H2O = 2-dehydropantoate + (6S)-5,6,7,8-tetrahydrofolate. It functions in the pathway cofactor biosynthesis; (R)-pantothenate biosynthesis; (R)-pantoate from 3-methyl-2-oxobutanoate: step 1/2. Functionally, catalyzes the reversible reaction in which hydroxymethyl group from 5,10-methylenetetrahydrofolate is transferred onto alpha-ketoisovalerate to form ketopantoate. The sequence is that of 3-methyl-2-oxobutanoate hydroxymethyltransferase from Leptospira borgpetersenii serovar Hardjo-bovis (strain L550).